We begin with the raw amino-acid sequence, 186 residues long: MLLLVGLGNPGKQYEFTRHNVGFVVADTVARDFNFPEFSSKYDALVSVGNVGLHRAMIVKPATFMNRSGAAVLKAASMHKIPAEQITVFHDDADLQHGVVKVKQGGGNAGHNGLRSIDAAIGCQYWRVRLGVGRPDVGSLSGHVLSDFHDFDSVQQLAHKISANLTELLDGNVNGFISKIRCDHAQ.

A tRNA-binding site is contributed by Y14. Residue H19 is the Proton acceptor of the active site. The tRNA site is built by F64, N66, and N112.

This sequence belongs to the PTH family. Monomer.

Its subcellular location is the cytoplasm. It carries out the reaction an N-acyl-L-alpha-aminoacyl-tRNA + H2O = an N-acyl-L-amino acid + a tRNA + H(+). Functionally, hydrolyzes ribosome-free peptidyl-tRNAs (with 1 or more amino acids incorporated), which drop off the ribosome during protein synthesis, or as a result of ribosome stalling. Catalyzes the release of premature peptidyl moieties from peptidyl-tRNA molecules trapped in stalled 50S ribosomal subunits, and thus maintains levels of free tRNAs and 50S ribosomes. In Anaplasma marginale (strain St. Maries), this protein is Peptidyl-tRNA hydrolase.